The primary structure comprises 233 residues: Ribonuclease 3 (233 aa).

Positions 4–126 (LNKLMERLGH…IVGAIYIDAG (123 aa)) constitute an RNase III domain. Glu-39 contributes to the Mg(2+) binding site. Asp-43 is a catalytic residue. Mg(2+)-binding residues include Asp-112 and Glu-115. Glu-115 is a catalytic residue. Residues 153-222 (DAKSLLQEWL…AKRFLELLDD (70 aa)) enclose the DRBM domain.

Belongs to the ribonuclease III family. Homodimer. It depends on Mg(2+) as a cofactor.

It is found in the cytoplasm. The catalysed reaction is Endonucleolytic cleavage to 5'-phosphomonoester.. Digests double-stranded RNA. Involved in the processing of primary rRNA transcript to yield the immediate precursors to the large and small rRNAs (23S and 16S). Processes some mRNAs, and tRNAs when they are encoded in the rRNA operon. Processes pre-crRNA and tracrRNA of type II CRISPR loci if present in the organism. The polypeptide is Ribonuclease 3 (Coxiella burnetii (strain Dugway 5J108-111)).